Consider the following 212-residue polypeptide: Proteasome subunit beta (212 aa).

Positions 1 to 11 (MSQEHQDVKTG) are cleaved as a propeptide — removed in mature form; by autocatalysis. Thr12 functions as the Nucleophile in the catalytic mechanism.

Belongs to the peptidase T1B family. In terms of assembly, the 20S proteasome core is composed of 14 alpha and 14 beta subunits that assemble into four stacked heptameric rings, resulting in a barrel-shaped structure. The two inner rings, each composed of seven catalytic beta subunits, are sandwiched by two outer rings, each composed of seven alpha subunits. The catalytic chamber with the active sites is on the inside of the barrel. Has a gated structure, the ends of the cylinder being occluded by the N-termini of the alpha-subunits. Is capped at one or both ends by the proteasome regulatory ATPase, PAN.

The protein localises to the cytoplasm. The enzyme catalyses Cleavage of peptide bonds with very broad specificity.. The formation of the proteasomal ATPase PAN-20S proteasome complex, via the docking of the C-termini of PAN into the intersubunit pockets in the alpha-rings, triggers opening of the gate for substrate entry. Interconversion between the open-gate and close-gate conformations leads to a dynamic regulation of the 20S proteasome proteolysis activity. In terms of biological role, component of the proteasome core, a large protease complex with broad specificity involved in protein degradation. The chain is Proteasome subunit beta from Methanocorpusculum labreanum (strain ATCC 43576 / DSM 4855 / Z).